The following is a 389-amino-acid chain: LL-diaminopimelate aminotransferase (389 aa).

Substrate is bound by residues Tyr13 and Gly38. Pyridoxal 5'-phosphate is bound by residues Tyr67, 101–102, Tyr126, Asn176, Tyr207, and 235–237; these read SK and SLS. Residues Lys102, Tyr126, and Asn176 each contribute to the substrate site. An N6-(pyridoxal phosphate)lysine modification is found at Lys238. Position 246 (Arg246) interacts with pyridoxal 5'-phosphate. Arg364 contacts substrate.

This sequence belongs to the class-I pyridoxal-phosphate-dependent aminotransferase family. LL-diaminopimelate aminotransferase subfamily. In terms of assembly, homodimer. Requires pyridoxal 5'-phosphate as cofactor.

The catalysed reaction is (2S,6S)-2,6-diaminopimelate + 2-oxoglutarate = (S)-2,3,4,5-tetrahydrodipicolinate + L-glutamate + H2O + H(+). It functions in the pathway amino-acid biosynthesis; L-lysine biosynthesis via DAP pathway; LL-2,6-diaminopimelate from (S)-tetrahydrodipicolinate (aminotransferase route): step 1/1. Involved in the synthesis of meso-diaminopimelate (m-DAP or DL-DAP), required for both lysine and peptidoglycan biosynthesis. Catalyzes the direct conversion of tetrahydrodipicolinate to LL-diaminopimelate. This chain is LL-diaminopimelate aminotransferase, found in Halothermothrix orenii (strain H 168 / OCM 544 / DSM 9562).